Here is a 392-residue protein sequence, read N- to C-terminus: Aminomethyltransferase, mitochondrial (392 aa).

A mitochondrion-targeting transit peptide spans 1 to 16; the sequence is MLRAGCRAALARRHLS. Substrate-binding residues include Glu221, Arg250, and Tyr388.

The protein belongs to the GcvT family. The glycine cleavage system is composed of four proteins: P, T, L and H.

Its subcellular location is the mitochondrion. It carries out the reaction N(6)-[(R)-S(8)-aminomethyldihydrolipoyl]-L-lysyl-[protein] + (6S)-5,6,7,8-tetrahydrofolate = N(6)-[(R)-dihydrolipoyl]-L-lysyl-[protein] + (6R)-5,10-methylene-5,6,7,8-tetrahydrofolate + NH4(+). Functionally, the glycine cleavage system catalyzes the degradation of glycine. The protein is Aminomethyltransferase, mitochondrial of Gallus gallus (Chicken).